A 61-amino-acid polypeptide reads, in one-letter code: Early E3 6.4 kDa protein (61 aa).

Positions 1–25 (MGNAGPLKLHTITKPGTIPYPPHGS) are disordered.

This Homo sapiens (Human) protein is Early E3 6.4 kDa protein.